The chain runs to 148 residues: Deoxyuridine 5'-triphosphate nucleotidohydrolase (148 aa).

Substrate-binding positions include 68-70 (RSG), asparagine 81, 85-87 (TID), and lysine 95.

It belongs to the dUTPase family. The cofactor is Mg(2+).

It carries out the reaction dUTP + H2O = dUMP + diphosphate + H(+). It participates in pyrimidine metabolism; dUMP biosynthesis; dUMP from dCTP (dUTP route): step 2/2. Functionally, this enzyme is involved in nucleotide metabolism: it produces dUMP, the immediate precursor of thymidine nucleotides and it decreases the intracellular concentration of dUTP so that uracil cannot be incorporated into DNA. In Rickettsia conorii (strain ATCC VR-613 / Malish 7), this protein is Deoxyuridine 5'-triphosphate nucleotidohydrolase.